Here is a 224-residue protein sequence, read N- to C-terminus: MKRRISIAIDGPAAAGKSTVAKRIAERLSYVYIDTGAMYRALTYRALACGVDIHDEQALLSLLRDTSIELKPSPHGQIVLVNGDDVTDIIRGEAVTNAVSLVAKHPLVREEMVARQRALAEGGGVVMDGRDIGTHVLPNAEVKIFLKASVEERARRRHEENLARGFPSDLEKLKEEIARRDRLDSERETAPLRKAPDAVEIDTTSLSVEEVVERIMEIVNERIG.

An ATP-binding site is contributed by 11–19 (GPAAAGKST).

It belongs to the cytidylate kinase family. Type 1 subfamily.

It localises to the cytoplasm. The enzyme catalyses CMP + ATP = CDP + ADP. It catalyses the reaction dCMP + ATP = dCDP + ADP. The chain is Cytidylate kinase from Geobacillus kaustophilus (strain HTA426).